Reading from the N-terminus, the 289-residue chain is Mitochondrial fission regulator 1-like (289 aa).

Residue threonine 27 is modified to Phosphothreonine. At serine 38 the chain carries Phosphoserine. Phosphoserine; by AMPK is present on serine 100. A phosphoserine mark is found at serine 107, serine 221, and serine 222. Serine 235 bears the Phosphoserine; by AMPK mark. Phosphoserine is present on residues serine 258 and serine 270.

Belongs to the MTFR1 family. Post-translationally, phosphorylated by AMPK. Upon stress, phosphorylation at Ser-100 and Ser-235 by AMPK is sufficient to induce mitochondrial fragmentation.

It localises to the mitochondrion outer membrane. In terms of biological role, mitochondrial protein required for adaptation of miochondrial dynamics to metabolic changes. Regulates mitochondrial morphology at steady state and mediates AMPK-dependent stress-induced mitochondrial fragmentation via the control of OPA1 levels. This is Mitochondrial fission regulator 1-like (Mtfr1l) from Mus musculus (Mouse).